The primary structure comprises 645 residues: Threonine--tRNA ligase (645 aa).

The TGS domain maps to 1-61 (MPAITLPDGS…SSDASVKFIT (61 aa)). Residues 243–536 (DHRRIGREMD…LIEQYAGKFP (294 aa)) form a catalytic region. Zn(2+) contacts are provided by Cys336, His387, and His513.

It belongs to the class-II aminoacyl-tRNA synthetase family. Homodimer. It depends on Zn(2+) as a cofactor.

The protein localises to the cytoplasm. It catalyses the reaction tRNA(Thr) + L-threonine + ATP = L-threonyl-tRNA(Thr) + AMP + diphosphate + H(+). In terms of biological role, catalyzes the attachment of threonine to tRNA(Thr) in a two-step reaction: L-threonine is first activated by ATP to form Thr-AMP and then transferred to the acceptor end of tRNA(Thr). Also edits incorrectly charged L-seryl-tRNA(Thr). This is Threonine--tRNA ligase from Gluconobacter oxydans (strain 621H) (Gluconobacter suboxydans).